The sequence spans 85 residues: Large ribosomal subunit protein bL27 (85 aa).

It belongs to the bacterial ribosomal protein bL27 family.

The sequence is that of Large ribosomal subunit protein bL27 from Campylobacter concisus (strain 13826).